Here is a 417-residue protein sequence, read N- to C-terminus: Serine hydroxymethyltransferase (417 aa).

Residues Leu-121 and 125 to 127 (GHL) each bind (6S)-5,6,7,8-tetrahydrofolate. Residue Lys-229 is modified to N6-(pyridoxal phosphate)lysine. 355–357 (SPF) lines the (6S)-5,6,7,8-tetrahydrofolate pocket.

The protein belongs to the SHMT family. As to quaternary structure, homodimer. Pyridoxal 5'-phosphate is required as a cofactor.

The protein resides in the cytoplasm. The catalysed reaction is (6R)-5,10-methylene-5,6,7,8-tetrahydrofolate + glycine + H2O = (6S)-5,6,7,8-tetrahydrofolate + L-serine. Its pathway is one-carbon metabolism; tetrahydrofolate interconversion. It functions in the pathway amino-acid biosynthesis; glycine biosynthesis; glycine from L-serine: step 1/1. Functionally, catalyzes the reversible interconversion of serine and glycine with tetrahydrofolate (THF) serving as the one-carbon carrier. This reaction serves as the major source of one-carbon groups required for the biosynthesis of purines, thymidylate, methionine, and other important biomolecules. Also exhibits THF-independent aldolase activity toward beta-hydroxyamino acids, producing glycine and aldehydes, via a retro-aldol mechanism. The polypeptide is Serine hydroxymethyltransferase (Shewanella baltica (strain OS195)).